Here is a 372-residue protein sequence, read N- to C-terminus: Probable NADH-dependent flavin oxidoreductase YqiG (372 aa).

This sequence belongs to the NADH:flavin oxidoreductase/NADH oxidase family.

The chain is Probable NADH-dependent flavin oxidoreductase YqiG (yqiG) from Bacillus subtilis (strain 168).